Here is a 398-residue protein sequence, read N- to C-terminus: MEIIQTTEAFKALVQDIKTSINGYKEPLAFGVCRVDMGQLNLEKTLQATYPVINWNENFGSAAIFIKALQEQGVEIDFTQSEVICNINKAFLKSCLNAFSPYSEEAYGDAHKNIQVISALYNQIATSGSKDGEFKVTFIFADEPLKSVEATYLKLYALSQAKVEIRSINLNGAFGALPNVAWSNGKPLELDYLREFEIELKLANEYPHIEFVDKFPRFLQHIIPADNTRILDTSKVRFGAQLAAGTTVMPGASYVNFNAGTTGAVMVEGRISSSAVVGAGSDIGGGASILGVLSGTDGNPITIGKNTLLGANSTCGIPLGDGCIIDGGLAVFAGTKFHINDAELIELKKVNPNTKFDNYMKGWELAGLHGLHFRQNSLNGQYVVQRSTREIKLNTDLH.

The active-site Acyl-anhydride intermediate is glutamate 268. Succinyl-CoA contacts are provided by residues arginine 270, glycine 285, serine 288, alanine 311, 326–327, glycine 334, lysine 361, and 374–377; these read DG and RQNS.

This sequence belongs to the type 2 tetrahydrodipicolinate N-succinyltransferase family. In terms of assembly, homotrimer.

It localises to the cytoplasm. The catalysed reaction is (S)-2,3,4,5-tetrahydrodipicolinate + succinyl-CoA + H2O = (S)-2-succinylamino-6-oxoheptanedioate + CoA. The protein operates within amino-acid biosynthesis; L-lysine biosynthesis via DAP pathway; LL-2,6-diaminopimelate from (S)-tetrahydrodipicolinate (succinylase route): step 1/3. Catalyzes the conversion of the cyclic tetrahydrodipicolinate (THDP) into the acyclic N-succinyl-L-2-amino-6-oxopimelate using succinyl-CoA. This Sulfurimonas denitrificans (strain ATCC 33889 / DSM 1251) (Thiomicrospira denitrificans (strain ATCC 33889 / DSM 1251)) protein is 2,3,4,5-tetrahydropyridine-2,6-dicarboxylate N-succinyltransferase.